The sequence spans 827 residues: MNLSRRDFMKANAALAAASVAGLIIPVKNVNAADTSITWDKAVCRFCGTGCAVLVGTKDGRVVASQGDPDAEVNRGLNCIKGYFLPKIMYGKDRLTHPMLRMKNGQYDKEGEFTPVTWDFAFKTMAEKFKSALKAKGPNGVGMFTSGQSTIFEGVAKSKLFKAGLLSNNIDPNARHCMASAAVAFVRTFGIDEPMGCYDDIEHADAFVLWGSNMAEMHPILWSRISDRRLANPDTVSVNVLSTFEHRSFELADLGILLKPQSDLAILNYIANYLIENNAINREFIEKHTKFKRGETDIGYGLRPQDPREQIAKNVKTAGKMYDSSFEEFKKLVAPYTLEKAHEISGVPKEQLEKLAKLYADPNKKVVSYWTMGINQHTRGVWANHLIYNIHLLTGKISLPGCGPFSLTGQPSACGTAREVGTFIHRLPADLVVTKPEHRKIAEKIWKLPEGLISDKLGFHAVAQSRALKDGKMQVLWQMCNNNMQAGPNINEETYPGWRNPDNFIVVSDPYPTVSALSADLILPTAMWVEKEGAYGNAERRTQFWRQQVKAPGEAKSDLWQLVEFSKYFTTDEVWPAEILAKNPAYQGKTLYEVLYLNGQVNQYSNDELKGRLNDEAYHFGFYIQKGLFEEYASFGRGHGHDLADFDTYHKARGLRWPVVDGKETLWRYREGYDPYVKAGEGVSFYGQADKRAVILAVPYEPPAEVPDREYDLWLTTGRILEHWHTGSMTRRVPELHRSFPNNLVWMNPNDAKKRGLKHGDKIKVISRRGEITSYIDTRGRNKCPEGLIYTTFFDAGQLANKLILDATDPISKETDFKKCAVKVVKA.

The tat-type signal signal peptide spans 1-32 (MNLSRRDFMKANAALAAASVAGLIIPVKNVNA). A 4Fe-4S Mo/W bis-MGD-type domain is found at 37–93 (ITWDKAVCRFCGTGCAVLVGTKDGRVVASQGDPDAEVNRGLNCIKGYFLPKIMYGKD). [4Fe-4S] cluster contacts are provided by cysteine 44, cysteine 47, cysteine 51, and cysteine 79. Residues lysine 81, glutamine 148, asparagine 173, cysteine 177, 210–217 (WGSNMAEM), 242–246 (STFEH), 261–263 (QSD), methionine 372, glutamine 376, asparagine 482, 508–509 (SD), lysine 531, aspartate 558, and 717–726 (TGRILEHWHT) contribute to the Mo-bis(molybdopterin guanine dinucleotide) site. Phenylalanine 793 contacts substrate. The Mo-bis(molybdopterin guanine dinucleotide) site is built by asparagine 801 and lysine 818.

This sequence belongs to the prokaryotic molybdopterin-containing oxidoreductase family. NasA/NapA/NarB subfamily. As to quaternary structure, component of the periplasmic nitrate reductase NapAB complex composed of NapA and NapB. [4Fe-4S] cluster is required as a cofactor. Requires Mo-bis(molybdopterin guanine dinucleotide) as cofactor. Predicted to be exported by the Tat system. The position of the signal peptide cleavage has not been experimentally proven.

The protein localises to the periplasm. The enzyme catalyses 2 Fe(II)-[cytochrome] + nitrate + 2 H(+) = 2 Fe(III)-[cytochrome] + nitrite + H2O. Catalytic subunit of the periplasmic nitrate reductase complex NapAB. Receives electrons from NapB and catalyzes the reduction of nitrate to nitrite. The chain is Periplasmic nitrate reductase from Histophilus somni (strain 129Pt) (Haemophilus somnus).